The sequence spans 325 residues: GMP reductase (325 aa).

The active-site Thioimidate intermediate is the Cys-173. 202–225 serves as a coordination point for NADP(+); the sequence is IIADGGIRSHGDIAKSVRFGATMV.

The protein belongs to the IMPDH/GMPR family. GuaC type 2 subfamily.

The catalysed reaction is IMP + NH4(+) + NADP(+) = GMP + NADPH + 2 H(+). In terms of biological role, catalyzes the irreversible NADPH-dependent deamination of GMP to IMP. It functions in the conversion of nucleobase, nucleoside and nucleotide derivatives of G to A nucleotides, and in maintaining the intracellular balance of A and G nucleotides. The protein is GMP reductase of Delftia acidovorans (strain DSM 14801 / SPH-1).